Consider the following 138-residue polypeptide: ATP synthase epsilon chain (138 aa).

Belongs to the ATPase epsilon chain family. F-type ATPases have 2 components, CF(1) - the catalytic core - and CF(0) - the membrane proton channel. CF(1) has five subunits: alpha(3), beta(3), gamma(1), delta(1), epsilon(1). CF(0) has three main subunits: a, b and c.

Its subcellular location is the cell inner membrane. Produces ATP from ADP in the presence of a proton gradient across the membrane. The sequence is that of ATP synthase epsilon chain from Psychrobacter cryohalolentis (strain ATCC BAA-1226 / DSM 17306 / VKM B-2378 / K5).